The sequence spans 953 residues: ABC transporter A family member 11 (953 aa).

Transmembrane regions (helical) follow at residues 33-53 (CLQI…EEAM), 230-250 (GPVF…GALV), 277-297 (TWEG…GMIF), 307-327 (FVLV…LAFA), 341-361 (VGFL…TGFP), and 417-437 (VISI…WFVL). In terms of domain architecture, ABC transporter spans 519-764 (VQIHGLAKTY…FGTGFVATVS (246 aa)). Residue 565–572 (GPNGAGKT) coordinates ATP.

The protein belongs to the ABC transporter superfamily. ABCA family. CPR flippase (TC 3.A.1.211) subfamily.

The protein localises to the membrane. The protein is ABC transporter A family member 11 (ABCA11) of Arabidopsis thaliana (Mouse-ear cress).